A 684-amino-acid chain; its full sequence is Sec1 family domain-containing protein 2 (684 aa).

The protein belongs to the STXBP/unc-18/SEC1 family.

May be involved in protein transport. This chain is Sec1 family domain-containing protein 2 (SCFD2), found in Homo sapiens (Human).